A 352-amino-acid chain; its full sequence is Uroporphyrinogen decarboxylase (352 aa).

Substrate contacts are provided by residues 26 to 30 (RQAGR), D76, Y153, S208, and H323.

It belongs to the uroporphyrinogen decarboxylase family. Homodimer.

It is found in the cytoplasm. The catalysed reaction is uroporphyrinogen III + 4 H(+) = coproporphyrinogen III + 4 CO2. Its pathway is porphyrin-containing compound metabolism; protoporphyrin-IX biosynthesis; coproporphyrinogen-III from 5-aminolevulinate: step 4/4. Catalyzes the decarboxylation of four acetate groups of uroporphyrinogen-III to yield coproporphyrinogen-III. The chain is Uroporphyrinogen decarboxylase from Prochlorococcus marinus (strain NATL1A).